The following is a 609-amino-acid chain: MSTGFNAQSFLRTVTSSAGVYRMYDVKGDVIYVGKAKDLKKRLSSYFRKNLGNVKTQALVSHIHHIDVTLTHSETDALLLENDYIKQYMPKYNVLLRDDKSYPYILLSQHEHPRLAYHRGPQREKGHYFGPYPNGGAVRESLHLMQKLFPIRQCDDLYYKSRTRPCLQYQLSRCSAPCVGKVSNAEYDEQVKLASLFLKGKDKQVISELVAKMEEAAEQQAYEQAARFRDQIMALRRVAEQQEVSGNTGDMDVIGVHYASGIACFHLLFIREGKIFGSRSYYPTVPAQTDIEEVLRSFLLQFYLNADIQRTIPKEVVISHHFEELHELEAAVSEALNKKFSIKTNVRADRASFLRLAITNATNAVMTRLSHKNTVEQRFVLLEEILELNAPIQRMECFDISHTMGESTVASCVVFNREGPHKAEYRRYNIEGITPGDDYAAMKQAISRRFDKIDASGKIPDILFIDGGLGQLRIAQQIVDEKFVNLDKAPQLIGVAKGESRKPGLETLIFGDTETSFSLEDDSPALHLIQHIRDESHRFAITGHRNRRQKTRNTSTLESIPGIGPKRRKALLQHLGGLQEVKGASVAELAKVPGISIEMAQTIHDALRG.

One can recognise a GIY-YIG domain in the interval Ser16–Val94. Positions Lys203 to Val238 constitute a UVR domain.

This sequence belongs to the UvrC family. Interacts with UvrB in an incision complex.

The protein localises to the cytoplasm. Functionally, the UvrABC repair system catalyzes the recognition and processing of DNA lesions. UvrC both incises the 5' and 3' sides of the lesion. The N-terminal half is responsible for the 3' incision and the C-terminal half is responsible for the 5' incision. This Shewanella oneidensis (strain ATCC 700550 / JCM 31522 / CIP 106686 / LMG 19005 / NCIMB 14063 / MR-1) protein is UvrABC system protein C.